The sequence spans 175 residues: Large ribosomal subunit protein uL10 (175 aa).

This sequence belongs to the universal ribosomal protein uL10 family. Part of the ribosomal stalk of the 50S ribosomal subunit. The N-terminus interacts with L11 and the large rRNA to form the base of the stalk. The C-terminus forms an elongated spine to which L12 dimers bind in a sequential fashion forming a multimeric L10(L12)X complex.

In terms of biological role, forms part of the ribosomal stalk, playing a central role in the interaction of the ribosome with GTP-bound translation factors. In Prochlorococcus marinus (strain NATL1A), this protein is Large ribosomal subunit protein uL10.